A 359-amino-acid chain; its full sequence is Glyceraldehyde-3-phosphate dehydrogenase, glycosomal (359 aa).

NAD(+) is bound by residues 12–13 (RI), Asp-38, Gln-91, and Ser-134. D-glyceraldehyde 3-phosphate contacts are provided by residues 165-167 (SCT), Thr-197, 226-227 (TG), and Arg-249. Residue Cys-166 is the Nucleophile of the active site. Asn-335 lines the NAD(+) pocket. The Microbody targeting signal motif lies at 357 to 359 (ARL).

This sequence belongs to the glyceraldehyde-3-phosphate dehydrogenase family. Homotetramer.

The protein localises to the glycosome. It carries out the reaction D-glyceraldehyde 3-phosphate + phosphate + NAD(+) = (2R)-3-phospho-glyceroyl phosphate + NADH + H(+). It participates in carbohydrate degradation; glycolysis; pyruvate from D-glyceraldehyde 3-phosphate: step 1/5. This Trypanosoma cruzi protein is Glyceraldehyde-3-phosphate dehydrogenase, glycosomal.